The following is a 542-amino-acid chain: Chaperonin GroEL (542 aa).

ATP is bound by residues 29–32 (TLGP), 86–90 (DGTTT), Gly413, 476–478 (NAA), and Asp492.

The protein belongs to the chaperonin (HSP60) family. In terms of assembly, forms a cylinder of 14 subunits composed of two heptameric rings stacked back-to-back. Interacts with the co-chaperonin GroES.

The protein localises to the cytoplasm. The catalysed reaction is ATP + H2O + a folded polypeptide = ADP + phosphate + an unfolded polypeptide.. Functionally, together with its co-chaperonin GroES, plays an essential role in assisting protein folding. The GroEL-GroES system forms a nano-cage that allows encapsulation of the non-native substrate proteins and provides a physical environment optimized to promote and accelerate protein folding. In Bacillus cytotoxicus (strain DSM 22905 / CIP 110041 / 391-98 / NVH 391-98), this protein is Chaperonin GroEL.